The primary structure comprises 150 residues: Leukotriene C4 synthase (150 aa).

Topologically, residues Met1 to Ala6 are cytoplasmic. The chain crosses the membrane as a helical span at residues Leu7–Ile27. The Lumenal segment spans residues Ser28–Arg48. Arg30 provides a ligand contact to glutathione. Catalysis depends on Arg31, which acts as the Proton donor. Ser36 carries the phosphoserine modification. A helical transmembrane segment spans residues Ile49–Val69. Glutathione-binding positions include Arg51–Asn55 and Glu58–Tyr59. The Cytoplasmic portion of the chain corresponds to Ala70–Phe73. Residues Phe74 to Phe94 traverse the membrane as a helical segment. Glutathione is bound at residue Tyr93–Tyr97. The Lumenal segment spans residues Gln95–Arg104. Arg104 functions as the Proton acceptor in the catalytic mechanism. A helical transmembrane segment spans residues Leu105–Leu124. Over Gly125–Ser150 the chain is Cytoplasmic.

The protein belongs to the MAPEG family. As to quaternary structure, homotrimer. Interacts with ALOX5AP and ALOX5. Post-translationally, phosphorylation at Ser-36 by RPS6KB1 inhibits the leukotriene-C4 synthase activity.

Its subcellular location is the nucleus outer membrane. The protein localises to the endoplasmic reticulum membrane. It localises to the nucleus membrane. The enzyme catalyses leukotriene C4 = leukotriene A4 + glutathione. It catalyses the reaction (13S,14S)-epoxy-(4Z,7Z,9E,11E,16Z,19Z)-docosahexaenoate + glutathione = (13R)-S-glutathionyl-(14S)-hydroxy-(4Z,7Z,9E,11E,16Z,19Z)-docosahexaenoate. The protein operates within lipid metabolism; leukotriene C4 biosynthesis. With respect to regulation, inhibited by MK886. Functionally, catalyzes the conjugation of leukotriene A4 with reduced glutathione (GSH) to form leukotriene C4 with high specificity. Can also catalyze the transfer of a glutathionyl group from glutathione (GSH) to 13(S),14(S)-epoxy-docosahexaenoic acid to form maresin conjugate in tissue regeneration 1 (MCTR1), a bioactive lipid mediator that possess potent anti-inflammatory and proresolving actions. The protein is Leukotriene C4 synthase (LTC4S) of Bos taurus (Bovine).